We begin with the raw amino-acid sequence, 293 residues long: Ribosomal RNA small subunit methyltransferase A (293 aa).

S-adenosyl-L-methionine-binding residues include Asn-29, Leu-31, Gly-56, Glu-77, Asp-102, and Asn-127.

It belongs to the class I-like SAM-binding methyltransferase superfamily. rRNA adenine N(6)-methyltransferase family. RsmA subfamily.

The protein resides in the cytoplasm. It carries out the reaction adenosine(1518)/adenosine(1519) in 16S rRNA + 4 S-adenosyl-L-methionine = N(6)-dimethyladenosine(1518)/N(6)-dimethyladenosine(1519) in 16S rRNA + 4 S-adenosyl-L-homocysteine + 4 H(+). In terms of biological role, specifically dimethylates two adjacent adenosines (A1518 and A1519) in the loop of a conserved hairpin near the 3'-end of 16S rRNA in the 30S particle. May play a critical role in biogenesis of 30S subunits. This is Ribosomal RNA small subunit methyltransferase A from Lysinibacillus sphaericus (strain C3-41).